A 537-amino-acid chain; its full sequence is Phosphoenolpyruvate carboxykinase (ATP) (537 aa).

Residues R61, Y195, and K201 each coordinate substrate. ATP-binding positions include K201, H220, and 236–244; that span reads GLSGTGKTT. The Mn(2+) site is built by K201 and H220. D257 contacts Mn(2+). Residues E285, R323, and T448 each coordinate ATP. Residue R323 participates in substrate binding.

Belongs to the phosphoenolpyruvate carboxykinase (ATP) family. The cofactor is Mn(2+).

It is found in the cytoplasm. The catalysed reaction is oxaloacetate + ATP = phosphoenolpyruvate + ADP + CO2. It participates in carbohydrate biosynthesis; gluconeogenesis. Involved in the gluconeogenesis. Catalyzes the conversion of oxaloacetate (OAA) to phosphoenolpyruvate (PEP) through direct phosphoryl transfer between the nucleoside triphosphate and OAA. In Rhodopseudomonas palustris (strain ATCC BAA-98 / CGA009), this protein is Phosphoenolpyruvate carboxykinase (ATP).